The chain runs to 340 residues: MAVTMEYEKDVKVAALDGKKIAVIGYGSQGHAHAQNLRDTGHDVIIGVRPGKSFDKAKEDGFDTYTVAEAAKLADVIMILAPDEIQQDLYEAEIAPNLEAGNAVGFAHGFNIHFEFIKVPADVDVFMCAPKGPGHLVRRTFEEGFGVPALYAVYQDATGNAKDIAMDWCKGVGSARVGLLETTYKEETEEDLFGEQAVLCGGLTALIEAGFEVLTEAGYAPELAYFEVLHEMKLIVDLIYEGGFKKMRQSISNTAEYGDYVSGPRVITEQVKENMKAVLADIQNGKFANDFVDDYKAGRPKLTAYREQAANLEIEKVGAELRKAMPFVGKNDDDAFKIYN.

The KARI N-terminal Rossmann domain maps to 5-182; the sequence is MEYEKDVKVA…GSARVGLLET (178 aa). NADP(+) is bound by residues 26 to 29, R49, S53, and 83 to 86; these read YGSQ and DEIQ. H108 is a catalytic residue. Residue G134 coordinates NADP(+). Residues 183–328 form the KARI C-terminal knotted domain; it reads TYKEETEEDL…AELRKAMPFV (146 aa). Residues D191, E195, E227, and E231 each contribute to the Mg(2+) site. S252 is a binding site for substrate.

The protein belongs to the ketol-acid reductoisomerase family. Mg(2+) is required as a cofactor.

It catalyses the reaction (2R)-2,3-dihydroxy-3-methylbutanoate + NADP(+) = (2S)-2-acetolactate + NADPH + H(+). The enzyme catalyses (2R,3R)-2,3-dihydroxy-3-methylpentanoate + NADP(+) = (S)-2-ethyl-2-hydroxy-3-oxobutanoate + NADPH + H(+). It participates in amino-acid biosynthesis; L-isoleucine biosynthesis; L-isoleucine from 2-oxobutanoate: step 2/4. Its pathway is amino-acid biosynthesis; L-valine biosynthesis; L-valine from pyruvate: step 2/4. Functionally, involved in the biosynthesis of branched-chain amino acids (BCAA). Catalyzes an alkyl-migration followed by a ketol-acid reduction of (S)-2-acetolactate (S2AL) to yield (R)-2,3-dihydroxy-isovalerate. In the isomerase reaction, S2AL is rearranged via a Mg-dependent methyl migration to produce 3-hydroxy-3-methyl-2-ketobutyrate (HMKB). In the reductase reaction, this 2-ketoacid undergoes a metal-dependent reduction by NADPH to yield (R)-2,3-dihydroxy-isovalerate. The sequence is that of Ketol-acid reductoisomerase (NADP(+)) from Streptococcus sanguinis (strain SK36).